Reading from the N-terminus, the 569-residue chain is Anti-Muellerian hormone type-2 receptor (569 aa).

The signal sequence occupies residues 1–17 (MLGTLGLWALLPAAVQA). Residues 18-148 (PPNRRTCVFF…AAPGESPWMA (131 aa)) are Extracellular-facing. 2 cysteine pairs are disulfide-bonded: C55–C79 and C92–C109. N-linked (GlcNAc...) asparagine glycosylation is present at N66. N119 is a glycosylation site (N-linked (GlcNAc...) asparagine). The helical transmembrane segment at 149-169 (LALLGLVLLLLLLLGGIVVAL) threads the bilayer. Over 170 to 569 (LQRKAYRVQS…PGAACASSDV (400 aa)) the chain is Cytoplasmic. Positions 201–511 (LCFSQVIREG…RLVALVHPQE (311 aa)) constitute a Protein kinase domain. Residues 207–215 (IREGGHAAV) and K228 each bind ATP. D331 (proton acceptor) is an active-site residue. The segment at 512–535 (AQPCPEGRPHSHPEDWPPAPAPAP) is disordered.

This sequence belongs to the protein kinase superfamily. TKL Ser/Thr protein kinase family. TGFB receptor subfamily. In terms of assembly, interacts with type I receptor ACVR1. Requires Mg(2+) as cofactor. The cofactor is Mn(2+).

It localises to the membrane. It catalyses the reaction L-threonyl-[receptor-protein] + ATP = O-phospho-L-threonyl-[receptor-protein] + ADP + H(+). It carries out the reaction L-seryl-[receptor-protein] + ATP = O-phospho-L-seryl-[receptor-protein] + ADP + H(+). Its function is as follows. On ligand binding, forms a receptor complex consisting of two type II and two type I transmembrane serine/threonine kinases. Type II receptors phosphorylate and activate type I receptors which autophosphorylate, then bind and activate SMAD transcriptional regulators. Receptor for anti-Muellerian hormone. This chain is Anti-Muellerian hormone type-2 receptor (AMHR2), found in Oryctolagus cuniculus (Rabbit).